The following is a 550-amino-acid chain: CTP synthase (550 aa).

The interval 1–277 (MNGSADAGPR…GRAVERALGL (277 aa)) is amidoligase domain. Ser23 lines the CTP pocket. Residue Ser23 participates in UTP binding. 24 to 29 (SLGKGI) is an ATP binding site. Tyr64 contacts L-glutamine. ATP is bound at residue Asp81. The Mg(2+) site is built by Asp81 and Glu151. CTP contacts are provided by residues 158 to 160 (DIE), 198 to 203 (KTKPTQ), and Lys234. UTP contacts are provided by residues 198-203 (KTKPTQ) and Lys234. Val252 contributes to the ATP binding site. The region spanning 302 to 549 (KIAIAGKYVK…VEAALAYQER (248 aa)) is the Glutamine amidotransferase type-1 domain. Gly364 is an L-glutamine binding site. The Nucleophile; for glutamine hydrolysis role is filled by Cys391. L-glutamine is bound by residues 392-395 (LGLQ), Glu415, and Arg472. Active-site residues include His522 and Glu524.

It belongs to the CTP synthase family. Homotetramer in the presence of UTP and ATP. Is in a protein concentration-dependent equilibrium between monomer, dimer, and tetramer in the absence of UTP and ATP.

It carries out the reaction UTP + L-glutamine + ATP + H2O = CTP + L-glutamate + ADP + phosphate + 2 H(+). The enzyme catalyses L-glutamine + H2O = L-glutamate + NH4(+). It catalyses the reaction UTP + NH4(+) + ATP = CTP + ADP + phosphate + 2 H(+). Its pathway is pyrimidine metabolism; CTP biosynthesis via de novo pathway; CTP from UDP: step 2/2. Its activity is regulated as follows. Allosterically activated by GTP, when glutamine is the substrate. GTP has no effect on the reaction when ammonia is the substrate. The allosteric effector GTP functions by stabilizing the protein conformation that binds the tetrahedral intermediate(s) formed during glutamine hydrolysis. Inhibited by the product CTP, via allosteric rather than competitive inhibition. Catalyzes the ATP-dependent amination of UTP to CTP with either L-glutamine or ammonia as the source of nitrogen. Regulates intracellular CTP levels through interactions with the four ribonucleotide triphosphates. The sequence is that of CTP synthase from Thermus thermophilus (strain ATCC 27634 / DSM 579 / HB8).